Reading from the N-terminus, the 219-residue chain is MTDRIPALQAWYGGTFDPIHYGHLRAVEALAREVKLTQVTILPNNVPPHRPQPGASSLQRKAMVELAIAGHPLFRLDTRELQRATPSWTSETMVQLRLEAGPDAPLAFIIGQDSLLTLRTWHNYEALLACCHLLVCRRPGYPVEMKTDEDQRWLAPRLARHVDELHREPAGKIYLADTPLYPISATDIRARLASHQSCDDLLPPAVLAYIQRHALYRPA.

It belongs to the NadD family.

It catalyses the reaction nicotinate beta-D-ribonucleotide + ATP + H(+) = deamido-NAD(+) + diphosphate. It functions in the pathway cofactor biosynthesis; NAD(+) biosynthesis; deamido-NAD(+) from nicotinate D-ribonucleotide: step 1/1. Its function is as follows. Catalyzes the reversible adenylation of nicotinate mononucleotide (NaMN) to nicotinic acid adenine dinucleotide (NaAD). This chain is Probable nicotinate-nucleotide adenylyltransferase, found in Cronobacter sakazakii (strain ATCC BAA-894) (Enterobacter sakazakii).